Consider the following 122-residue polypeptide: Large ribosomal subunit protein uL14 (122 aa).

Belongs to the universal ribosomal protein uL14 family. As to quaternary structure, part of the 50S ribosomal subunit. Forms a cluster with proteins L3 and L19. In the 70S ribosome, L14 and L19 interact and together make contacts with the 16S rRNA in bridges B5 and B8.

In terms of biological role, binds to 23S rRNA. Forms part of two intersubunit bridges in the 70S ribosome. This Phytoplasma mali (strain AT) protein is Large ribosomal subunit protein uL14.